A 115-amino-acid polypeptide reads, in one-letter code: Transmembrane protein 14C (115 aa).

The next 4 membrane-spanning stretches (helical) occupy residues 8 to 28, 33 to 53, 63 to 83, and 88 to 108; these read LVPL…GGII, AGSV…GLGA, VWVF…RFYN, and MPAG…VAKI.

The protein belongs to the TMEM14 family.

It is found in the mitochondrion membrane. Its function is as follows. Required for normal heme biosynthesis. The chain is Transmembrane protein 14C (Tmem14c) from Rattus norvegicus (Rat).